The primary structure comprises 323 residues: tRNA dimethylallyltransferase (323 aa).

16-23 contacts ATP; it reads GPTASGKT. 18-23 provides a ligand contact to substrate; the sequence is TASGKT. Interaction with substrate tRNA regions lie at residues 41–44, 165–169, 253–258, and 286–293; these read DSAL, QRIQR, RCVGYR, and KRQITWLR.

It belongs to the IPP transferase family. As to quaternary structure, monomer. Mg(2+) is required as a cofactor.

The enzyme catalyses adenosine(37) in tRNA + dimethylallyl diphosphate = N(6)-dimethylallyladenosine(37) in tRNA + diphosphate. In terms of biological role, catalyzes the transfer of a dimethylallyl group onto the adenine at position 37 in tRNAs that read codons beginning with uridine, leading to the formation of N6-(dimethylallyl)adenosine (i(6)A). The protein is tRNA dimethylallyltransferase of Ralstonia nicotianae (strain ATCC BAA-1114 / GMI1000) (Ralstonia solanacearum).